Here is a 442-residue protein sequence, read N- to C-terminus: tRNA modification GTPase MnmE (442 aa).

Residues arginine 24, glutamate 84, and arginine 124 each contribute to the (6S)-5-formyl-5,6,7,8-tetrahydrofolate site. A TrmE-type G domain is found at 218 to 366 (GARVALFGPV…LRDDMLGRLW (149 aa)). GTP-binding positions include 228-233 (NAGKST), 247-253 (DDEPGTT), and 272-275 (DTAG). Serine 232 and threonine 253 together coordinate Mg(2+). Residue lysine 442 participates in (6S)-5-formyl-5,6,7,8-tetrahydrofolate binding.

Belongs to the TRAFAC class TrmE-Era-EngA-EngB-Septin-like GTPase superfamily. TrmE GTPase family. Homodimer. Heterotetramer of two MnmE and two MnmG subunits. Requires K(+) as cofactor.

The protein localises to the cytoplasm. Functionally, exhibits a very high intrinsic GTPase hydrolysis rate. Involved in the addition of a carboxymethylaminomethyl (cmnm) group at the wobble position (U34) of certain tRNAs, forming tRNA-cmnm(5)s(2)U34. The chain is tRNA modification GTPase MnmE from Myxococcus xanthus (strain DK1622).